Reading from the N-terminus, the 295-residue chain is sn-glycerol-3-phosphate transport system permease protein UgpA (295 aa).

Residues 1–11 (MSSSRPVFRSR) are Cytoplasmic-facing. A helical transmembrane segment spans residues 12-32 (WLPYLLVAPQLVITVIFFIWP). The Periplasmic segment spans residues 33–80 (AGEALWYSLQSVDPFGFSSQFVGLENFVALFHDSYYLDAFWTTIKFSA). Residues 76–284 (IKFSALVTFS…FLVIILTVVQ (209 aa)) form the ABC transmembrane type-1 domain. A helical membrane pass occupies residues 81–101 (LVTFSGLLVSLFFAALVDYVV). The Cytoplasmic portion of the chain corresponds to 102–109 (RGSRFYQT). Residues 110 to 130 (LMLLPYAVAPAVAAVLWIFLF) traverse the membrane as a helical segment. The Periplasmic portion of the chain corresponds to 131–157 (NPGRGLITHFLGEFGYDWNHAQNSGQA). The chain crosses the membrane as a helical span at residues 158-178 (MFLVVFASVWKQISYNFLFFF). Residues 179–207 (AALQSIPRSLVEAAAIDGAGPIRRFFRLS) lie on the Cytoplasmic side of the membrane. Residues 208 to 228 (LPLIAPVSFFLLVVNLVYAFF) traverse the membrane as a helical segment. Residues 229 to 262 (DTFPVIDAATAGGPVQATTTLIYKIYREGFTGLD) are Periplasmic-facing. Residues 263 to 283 (LSASAAQSVVLMFLVIILTVV) traverse the membrane as a helical segment. Over 284 to 295 (QFRYVESKVRYQ) the chain is Cytoplasmic.

It belongs to the binding-protein-dependent transport system permease family. UgpAE subfamily. As to quaternary structure, the complex is composed of two ATP-binding proteins (UgpC), two transmembrane proteins (UgpA and UgpE) and a solute-binding protein (UgpB).

It localises to the cell inner membrane. In terms of biological role, part of the ABC transporter complex UgpBAEC involved in sn-glycerol-3-phosphate (G3P) import. Probably responsible for the translocation of the substrate across the membrane. The chain is sn-glycerol-3-phosphate transport system permease protein UgpA (ugpA) from Salmonella typhimurium (strain LT2 / SGSC1412 / ATCC 700720).